We begin with the raw amino-acid sequence, 137 residues long: Cell division protein SepF (137 aa).

This sequence belongs to the SepF family. As to quaternary structure, homodimer. Interacts with FtsZ.

It is found in the cytoplasm. In terms of biological role, cell division protein that is part of the divisome complex and is recruited early to the Z-ring. Probably stimulates Z-ring formation, perhaps through the cross-linking of FtsZ protofilaments. Its function overlaps with FtsA. This Carboxydothermus hydrogenoformans (strain ATCC BAA-161 / DSM 6008 / Z-2901) protein is Cell division protein SepF.